A 75-amino-acid chain; its full sequence is Small ribosomal subunit protein bS18 (75 aa).

Belongs to the bacterial ribosomal protein bS18 family. In terms of assembly, part of the 30S ribosomal subunit. Forms a tight heterodimer with protein bS6.

Its function is as follows. Binds as a heterodimer with protein bS6 to the central domain of the 16S rRNA, where it helps stabilize the platform of the 30S subunit. The polypeptide is Small ribosomal subunit protein bS18 (Mycoplasma capricolum subsp. capricolum (strain California kid / ATCC 27343 / NCTC 10154)).